We begin with the raw amino-acid sequence, 119 residues long: Large ribosomal subunit protein bL20 (119 aa).

This sequence belongs to the bacterial ribosomal protein bL20 family.

Binds directly to 23S ribosomal RNA and is necessary for the in vitro assembly process of the 50S ribosomal subunit. It is not involved in the protein synthesizing functions of that subunit. The chain is Large ribosomal subunit protein bL20 from Streptococcus gordonii (strain Challis / ATCC 35105 / BCRC 15272 / CH1 / DL1 / V288).